The following is a 657-amino-acid chain: Pyoverdine export ATP-binding/permease protein PvdT (657 aa).

The 240-residue stretch at 6–245 (IDLRGIRKSY…RSVNPAALQA (240 aa)) folds into the ABC transporter domain. 43–50 (GASGSGKS) serves as a coordination point for ATP. 4 helical membrane passes run 285 to 305 (ALTL…LAVG), 539 to 559 (IAAI…LMTV), 590 to 610 (LSVV…AALL), and 620 to 640 (LPAV…FGFM).

It belongs to the ABC transporter superfamily. Macrolide exporter (TC 3.A.1.122) family. Part of the tripartite efflux system PvdRT-OpmQ, which is composed of an inner membrane component with both ATPase and permease domains, PvdT, a periplasmic membrane fusion protein, PvdR, and an outer membrane component, OpmQ.

It is found in the cell inner membrane. In terms of biological role, part of the tripartite efflux system PvdRT-OpmQ required for the secretion into the extracellular milieu of the siderophore pyoverdine (PVD), which is involved in iron acquisition. This subunit binds PVD and drives its secretion by hydrolyzing ATP. The system is responsible for export of newly synthesized PVD after the final steps of biosynthesis have taken place in the periplasm. It is also responsible for recycling of PVD after internalization of ferri-PVD into the periplasm by the outer-membrane receptor FpvA and release of iron from PVD, thus making PVD available for new cycles of iron uptake. This Pseudomonas syringae pv. syringae (strain B728a) protein is Pyoverdine export ATP-binding/permease protein PvdT.